We begin with the raw amino-acid sequence, 359 residues long: MWGRWRGAGGRRGVAQPVIPQMKLLGGRVPLGASALGLLIVCWFYIFPGGERLPGHKEMIRQVLQFGPRWGRNRSSGDSFRKLLQDCCDPPRLFSMTKANTALGENLWYDGEFFQSLTIDNTTRSLFPQDTPIKLPLKRCSVVGNGGILKNSRCGEQIDEADFVMRCNLPPLSREYTDDVGTKTQLVTVNPSIIDKRFQNLLWSRKSFVESVSVYKQSYVYMPAFSTKRGTDPSLRVYYTLEDFGTNQTVLFANPNFLRNVGKFWKSKGVHSKRLSTGLFMVSAALSLCEEVTIYGFWPFQMDLGGRHISHHYYDNMLPLSGVHAMPEEFLQLWHLHKSGVLQMQLDQCKKDVSSKKPH.

Topologically, residues 1 to 28 (MWGRWRGAGGRRGVAQPVIPQMKLLGGR) are cytoplasmic. A helical; Signal-anchor for type II membrane protein transmembrane segment spans residues 29-49 (VPLGASALGLLIVCWFYIFPG). Residues 50-359 (GERLPGHKEM…KKDVSSKKPH (310 aa)) are Lumenal-facing. N73 and N121 each carry an N-linked (GlcNAc...) asparagine glycan. Disulfide bonds link C140–C289 and C154–C349. The CMP-N-acetyl-beta-neuraminate site is built by N145 and N168. N247 carries an N-linked (GlcNAc...) asparagine glycan. Residues S276, T277, G278, W298, and H312 each coordinate CMP-N-acetyl-beta-neuraminate. The Proton donor/acceptor role is filled by H324.

Belongs to the glycosyltransferase 29 family. Expressed in the dorsal blastopore lip and in the presumptive neuroectoderm in stage 11 embryos. During gastrulation, strongly expressed in the involuting mesoderm. At stages 13 and 16, expressed in the neural plate and neural fold, paraxial mesoderm and notochord. At stages 19 and 22 (neural tube and early tailbud), strongly expressed in the neural tube and notochord. At the tadpole stage, expressed in the head region, branchial arches and otic and optic primordia. Also localized in the notochord and weakly expressed in the somites. In adults, expressed in the brain and ovary. Isoform 2 (short) is expressed at a low level in the adult testis and muscle, and at a high level in the skin. Isoform 1 (long) is expressed at a high level in the adult lung and kidney. Both isoforms 1 and 2 are expressed in the gut and liver.

The protein resides in the golgi apparatus membrane. It catalyses the reaction an N-acetyl-alpha-neuraminyl-(2-&gt;3)-beta-D-galactosyl derivative + CMP-N-acetyl-beta-neuraminate = an N-acetyl-alpha-neuraminyl-(2-&gt;8)-N-acetyl-alpha-neuraminyl-(2-&gt;3)-beta-D-galactosyl derivative + CMP + H(+). The enzyme catalyses a ganglioside GM3 (d18:1(4E)) + CMP-N-acetyl-beta-neuraminate = a ganglioside GD3 (d18:1(4E)) + CMP + H(+). The catalysed reaction is a ganglioside GD3 (d18:1(4E)) + CMP-N-acetyl-beta-neuraminate = a ganglioside GT3 (d18:1(4E)) + CMP + H(+). It carries out the reaction a ganglioside GD1a (d18:1(4E)) + CMP-N-acetyl-beta-neuraminate = a ganglioside GT1a (d18:1(4E)) + CMP + H(+). It catalyses the reaction a ganglioside GT1b (d18:1(4E)) + CMP-N-acetyl-beta-neuraminate = a ganglioside GQ1b (d18:1(4E)) + CMP + H(+). The enzyme catalyses a ganglioside GM1b (d18:1(4E)) + CMP-N-acetyl-beta-neuraminate = a ganglioside GD1c (d18:1(4E)) + CMP + H(+). The catalysed reaction is a ganglioside GD3 + CMP-N-acetyl-beta-neuraminate = a ganglioside GT3 + CMP + H(+). It carries out the reaction [alpha-N-acetylneuraminyl-(2-&gt;8)](n)-alpha-N-acetylneuraminyl-(2-&gt;8)-alpha-N-acetylneuraminyl-(2-&gt;3)-beta-D-galactosyl-(1-&gt;4)-beta-D-glucosyl-(1&lt;-&gt;1)-ceramide + CMP-N-acetyl-beta-neuraminate = [alpha-N-acetylneuraminyl-(2-&gt;8)](n+1)-alpha-N-acetylneuraminyl-(2-&gt;8)-alpha-N-acetylneuraminyl-(2-&gt;3)-beta-D-galactosyl-(1-&gt;4)-beta-D-glucosyl-(1&lt;-&gt;1)-ceramide + CMP + H(+). It participates in protein modification; protein glycosylation. The protein operates within lipid metabolism; sphingolipid metabolism. In terms of biological role, catalyzes the addition of sialic acid in alpha 2,8-linkage to the sialic acid moiety of the ganglioside GM3 to form ganglioside GD3; gangliosides are a subfamily of complex glycosphingolipds that contain one or more residues of sialic acid. Glycosphingolipids are required for convergence extension movements during early development. Can catalyze the addition of a second alpha-2,8- sialic acid to GD3 to form GT3. Can use GM1b, GD1a and GT1b as acceptor substrates to synthesize GD1c, GT1a and GQ1b respectively. This chain is Alpha-N-acetylneuraminide alpha-2,8-sialyltransferase, found in Xenopus laevis (African clawed frog).